Consider the following 392-residue polypeptide: Probable glucan endo-1,6-beta-glucosidase B (392 aa).

The N-terminal stretch at 1 to 18 (MKVTRLAVLNTLATLTVA) is a signal peptide. Asparagine 31 carries an N-linked (GlcNAc...) asparagine glycan. Glutamate 220 serves as the catalytic Proton donor. Glutamate 322 acts as the Nucleophile in catalysis.

This sequence belongs to the glycosyl hydrolase 5 (cellulase A) family.

The protein localises to the secreted. The catalysed reaction is Random hydrolysis of (1-&gt;6)-linkages in (1-&gt;6)-beta-D-glucans.. Its function is as follows. Beta-glucanases participate in the metabolism of beta-glucan, the main structural component of the cell wall. Acts on lutean, pustulan and 1,6-oligo-beta-D-glucosides. In Aspergillus flavus (strain ATCC 200026 / FGSC A1120 / IAM 13836 / NRRL 3357 / JCM 12722 / SRRC 167), this protein is Probable glucan endo-1,6-beta-glucosidase B (exgB).